Here is a 448-residue protein sequence, read N- to C-terminus: Endoglucanase (448 aa).

Residues 1 to 34 (MFSKIKKINFFKKTFSFLIAVVMMLFTVLGTNTY) form the signal peptide. Substrate-binding positions include His70, 74–75 (WY), Tyr101, and His137. Residue Glu175 is the Proton donor of the active site. Tyr237 serves as a coordination point for substrate. Residue Glu263 is the Nucleophile of the active site. Residues 269 to 270 (AS), Trp297, and 302 to 304 (KSE) each bind substrate.

It belongs to the glycosyl hydrolase 5 (cellulase A) family.

It carries out the reaction Endohydrolysis of (1-&gt;4)-beta-D-glucosidic linkages in cellulose, lichenin and cereal beta-D-glucans.. The sequence is that of Endoglucanase (eglA) from Clostridium saccharobutylicum.